The sequence spans 156 residues: 6,7-dimethyl-8-ribityllumazine synthase (156 aa).

5-amino-6-(D-ribitylamino)uracil-binding positions include Phe-22, 57–59, and 81–83; these read AYE and TVI. 86–87 is a binding site for (2S)-2-hydroxy-3-oxobutyl phosphate; the sequence is GT. His-89 acts as the Proton donor in catalysis. Phe-114 is a binding site for 5-amino-6-(D-ribitylamino)uracil. Residue Arg-128 participates in (2S)-2-hydroxy-3-oxobutyl phosphate binding.

The protein belongs to the DMRL synthase family. Forms an icosahedral capsid composed of 60 subunits, arranged as a dodecamer of pentamers.

It catalyses the reaction (2S)-2-hydroxy-3-oxobutyl phosphate + 5-amino-6-(D-ribitylamino)uracil = 6,7-dimethyl-8-(1-D-ribityl)lumazine + phosphate + 2 H2O + H(+). The protein operates within cofactor biosynthesis; riboflavin biosynthesis; riboflavin from 2-hydroxy-3-oxobutyl phosphate and 5-amino-6-(D-ribitylamino)uracil: step 1/2. Functionally, catalyzes the formation of 6,7-dimethyl-8-ribityllumazine by condensation of 5-amino-6-(D-ribitylamino)uracil with 3,4-dihydroxy-2-butanone 4-phosphate. This is the penultimate step in the biosynthesis of riboflavin. This is 6,7-dimethyl-8-ribityllumazine synthase from Escherichia coli O45:K1 (strain S88 / ExPEC).